We begin with the raw amino-acid sequence, 298 residues long: tRNA pseudouridine synthase B (298 aa).

Catalysis depends on aspartate 39, which acts as the Nucleophile.

The protein belongs to the pseudouridine synthase TruB family. Type 1 subfamily.

It catalyses the reaction uridine(55) in tRNA = pseudouridine(55) in tRNA. Its function is as follows. Responsible for synthesis of pseudouridine from uracil-55 in the psi GC loop of transfer RNAs. This is tRNA pseudouridine synthase B from Lactobacillus delbrueckii subsp. bulgaricus (strain ATCC BAA-365 / Lb-18).